A 129-amino-acid chain; its full sequence is MARKQVSRKRRVKKNIENGVAHIRSTFNNTIVTITDEFGNALSWSSAGALGFRGSRKSTPFAAQMASETASKAAMEHGLKTVEVTVKGPGQGREAAIRALQSAGLEITAIKDVTPVPHNGCRPPKRRRV.

It belongs to the universal ribosomal protein uS11 family. In terms of assembly, part of the 30S ribosomal subunit. Interacts with proteins S7 and S18. Binds to IF-3.

Located on the platform of the 30S subunit, it bridges several disparate RNA helices of the 16S rRNA. Forms part of the Shine-Dalgarno cleft in the 70S ribosome. The protein is Small ribosomal subunit protein uS11 of Macrococcus caseolyticus (strain JCSC5402) (Macrococcoides caseolyticum).